The primary structure comprises 203 residues: A-type ATP synthase subunit E (203 aa).

This sequence belongs to the V-ATPase E subunit family. In terms of assembly, has multiple subunits with at least A(3), B(3), C, D, E, F, H, I and proteolipid K(x).

Its subcellular location is the cell membrane. Component of the A-type ATP synthase that produces ATP from ADP in the presence of a proton gradient across the membrane. The sequence is that of A-type ATP synthase subunit E from Methanococcus vannielii (strain ATCC 35089 / DSM 1224 / JCM 13029 / OCM 148 / SB).